The chain runs to 551 residues: Ubiquitin domain-containing protein DSK2b (551 aa).

The 76-residue stretch at 18–93 (VAVNIRCSNG…IHMVRGSAPS (76 aa)) folds into the Ubiquitin-like domain. The disordered stretch occupies residues 88-127 (RGSAPSSAPPPAPAASQTTAPSVTRGVGSDNSSNLGGASP). STI1 domains follow at residues 143–184 (GNAM…QNLM) and 197–236 (NPQMRELVDRNPELGHVLNDPSILRQTLEAARNPELMREM). Positions 294 to 319 (QGVTTQGSDASNNSSTPNAGTGTIPN) are enriched in polar residues. The segment at 294–336 (QGVTTQGSDASNNSSTPNAGTGTIPNANPLPNPWGATGGQTTA) is disordered. 2 STI1 domains span residues 373 to 410 (SPLGATPDASQLSQLLQNPAISQMMQSVFSNPQYMNQL) and 414 to 449 (NPQLRSMLDSNPQLREMMQNPDFLRQFSSPEMMQQM). The disordered stretch occupies residues 455 to 475 (SLSQNRNTASQDAGQTGAATG). Residues 465 to 475 (QDAGQTGAATG) are compositionally biased toward low complexity. The 45-residue stretch at 504-548 (PPEERYATQLQQLQEMGFYDRAENIRALLATNGNVNAAVERLLGS) folds into the UBA domain.

As to quaternary structure, interacts with 'Lys-48'-linked polyubiquitin chains via its UBA domain. Interacts with RPN10 via its ubiquitin-like domain. Interacts with PEX2 and PEX12. As to expression, ubiquitous.

The protein localises to the nucleus. It is found in the cytoplasm. Its function is as follows. Binds and presumably selects ubiquitin-conjugates for destruction. Prefers multiubiquitin chains rather than single ubiquitins, with a binding affinity for 'Lys-48'-linked ubiquitin chains. Acts as a ubiquitin receptor that associates with the 26S proteasomal docking subunit RPN10 for the indirect recognition of ubiquitinated substrates of ubiquitin/26S proteasome-mediated proteolysis (UPP). The sequence is that of Ubiquitin domain-containing protein DSK2b (DSK2B) from Arabidopsis thaliana (Mouse-ear cress).